Reading from the N-terminus, the 537-residue chain is Glutamyl-tRNA reductase, chloroplastic (537 aa).

A chloroplast-targeting transit peptide spans 1-48; sequence MMASTTSATAAGGAFAAAKTRAGSSAAGGGACARVAAGGRRRSGVVVR. Substrate is bound by residues 134–137, Ser-194, 199–201, and Gln-205; these read TCNR and EGQ. Catalysis depends on Cys-135, which acts as the Nucleophile. An NADP(+)-binding site is contributed by 276 to 281; the sequence is GAGKMG.

This sequence belongs to the glutamyl-tRNA reductase family.

Its subcellular location is the plastid. It localises to the chloroplast. It catalyses the reaction (S)-4-amino-5-oxopentanoate + tRNA(Glu) + NADP(+) = L-glutamyl-tRNA(Glu) + NADPH + H(+). It participates in porphyrin-containing compound metabolism; protoporphyrin-IX biosynthesis; 5-aminolevulinate from L-glutamyl-tRNA(Glu): step 1/2. Functionally, catalyzes the NADPH-dependent reduction of glutamyl-tRNA(Glu) to glutamate 1-semialdehyde (GSA). This Oryza sativa subsp. indica (Rice) protein is Glutamyl-tRNA reductase, chloroplastic.